The chain runs to 151 residues: MSIVRRSNVFDPFADLWADPFDTFRSIVPAISGGSSETAAFANARVDWKETPEAHVFKVDLPGVKKEEVKVEVEDGNVLVVSGERSREKEDKNDKWHRVERSSGKFVRRFRLPEDAKVEEVKAGLENGVLTVTVPKAEVKKPEVKAIEISG.

A sHSP domain is found at glutamate 37–glycine 151.

Belongs to the small heat shock protein (HSP20) family. As to quaternary structure, may form oligomeric structures.

It localises to the cytoplasm. This Triticum aestivum (Wheat) protein is 16.9 kDa class I heat shock protein 1 (hsp16.9A).